Here is a 32-residue protein sequence, read N- to C-terminus: ilv operon leader peptide (32 aa).

This protein is involved in control of the biosynthesis of isoleucine, leucine, and valine. This chain is ilv operon leader peptide (ivbL), found in Escherichia coli (strain K12).